A 526-amino-acid chain; its full sequence is Peptide chain release factor 3 (526 aa).

Residues 8 to 277 enclose the tr-type G domain; sequence NKRRTFAIIS…GLTQWAPAPQ (270 aa). Residues 17–24, 85–89, and 139–142 each bind GTP; these read SHPDAGKT, DTPGH, and NKLD.

Belongs to the TRAFAC class translation factor GTPase superfamily. Classic translation factor GTPase family. PrfC subfamily.

Its subcellular location is the cytoplasm. Functionally, increases the formation of ribosomal termination complexes and stimulates activities of RF-1 and RF-2. It binds guanine nucleotides and has strong preference for UGA stop codons. It may interact directly with the ribosome. The stimulation of RF-1 and RF-2 is significantly reduced by GTP and GDP, but not by GMP. The chain is Peptide chain release factor 3 from Histophilus somni (strain 129Pt) (Haemophilus somnus).